A 394-amino-acid polypeptide reads, in one-letter code: MGGAAARLGAVILFVVIVGLHGVRGKYALADASLKMADPNRFRGKDLPVLDQLTDPPGVRRVYHIQAGLPDPFQPPSLPITVYYAVLERACRSVLLNAPSEAPQIVRGASEDVRKQPYNLTIAWFRMGGNCAIPITVMEYTECSYNKSLGACPIRTQPRWNYYDSFSAVSEDNLGFLMHAPAFETAGTYLRLVKINDWTEITQFILEHRAKGSCKYALPLRIPPSACLSPQAYQQGVTVDSIGMLPRFIPENQRTVAVYSLKIAGWHGPKAPYTSTLLPPELSETPNATQPELAPEDPEDSALLEDPVGTVAPQIPPNWHIPSIQDAATPYHPPATPNNMGLIAGAVGGSLLAALVICGIVYWMHRRTRKAPKRIRLPHIREDDQPSSHQPLFY.

An N-terminal signal peptide occupies residues 1-25; that stretch reads MGGAAARLGAVILFVVIVGLHGVRG. Residues 26-57 form an interaction with TNFRSF14 region; the sequence is KYALADASLKMADPNRFRGKDLPVLDQLTDPP. Topologically, residues 26–340 are virion surface; it reads KYALADASLK…YHPPATPNNM (315 aa). Position 64 (histidine 64) interacts with Zn(2+). 3 disulfide bridges follow: cysteine 91–cysteine 214, cysteine 131–cysteine 227, and cysteine 143–cysteine 152. N-linked (GlcNAc...) asparagine; by host glycosylation is found at asparagine 119 and asparagine 146. Aspartate 240 contacts Zn(2+). The tract at residues 261–305 is profusion; it reads LKIAGWHGPKAPYTSTLLPPELSETPNATQPELAPEDPEDSALLE. A disordered region spans residues 275–301; that stretch reads STLLPPELSETPNATQPELAPEDPEDS. Asparagine 287 is a glycosylation site (N-linked (GlcNAc...) asparagine; by host). The chain crosses the membrane as a helical span at residues 341–361; that stretch reads GLIAGAVGGSLLAALVICGIV. Over 362–394 the chain is Intravirion; sequence YWMHRRTRKAPKRIRLPHIREDDQPSSHQPLFY.

It belongs to the herpesviridae glycoprotein D family. As to quaternary structure, homodimer. Interacts with host receptor TNFRSF14. Interacts with host receptor NECTIN1. Mutant Rid1 interacts with host receptor NECTIN2. Interacts (via profusion domain) with gB; this interaction occurs in the absence of gH/gL. Interacts (via profusion domain) with gH/gL heterodimer; this interaction occurs in the absence of gB. Associates with the gB-gH/gL-gD complex. Interacts (via C-terminus) with UL11 tegument protein. Interacts (via C-terminus) with VP22 tegument protein; this interaction might be very weak. Interacts with host RSAD2.

Its subcellular location is the virion membrane. The protein resides in the host Golgi apparatus. Envelope glycoprotein that binds to the host cell entry receptors NECTIN1, TNFRSF14/HVEM and 3-O-sulfated heparan sulfate, promoting the virus entry into host cells. May trigger fusion with host membrane, by recruiting the fusion machinery composed of gB and gH/gL. The chain is Envelope glycoprotein D (gD) from Human herpesvirus 1 (strain KOS) (HHV-1).